Here is a 56-residue protein sequence, read N- to C-terminus: Large ribosomal subunit protein bL33 (56 aa).

Belongs to the bacterial ribosomal protein bL33 family.

The polypeptide is Large ribosomal subunit protein bL33 (Orientia tsutsugamushi (strain Ikeda) (Rickettsia tsutsugamushi)).